Reading from the N-terminus, the 104-residue chain is Integration host factor subunit beta (104 aa).

Belongs to the bacterial histone-like protein family. Heterodimer of an alpha and a beta chain.

Functionally, this protein is one of the two subunits of integration host factor, a specific DNA-binding protein that functions in genetic recombination as well as in transcriptional and translational control. The sequence is that of Integration host factor subunit beta from Xylella fastidiosa (strain M23).